A 108-amino-acid chain; its full sequence is Insulin (108 aa).

Residues 1–23 (MALWILLPLLALLILWGPDPAQA) form the signal peptide. Disulfide bonds link Cys30–Cys94 and Cys43–Cys107. The propeptide at 57–88 (EVEDPQVGQVELGAGPGAGSEQTLALEVARQA) is c peptide.

This sequence belongs to the insulin family. In terms of assembly, heterodimer of a B chain and an A chain linked by two disulfide bonds.

The protein localises to the secreted. Its function is as follows. Insulin decreases blood glucose concentration. It increases cell permeability to monosaccharides, amino acids and fatty acids. It accelerates glycolysis, the pentose phosphate cycle, and glycogen synthesis in liver. This Rodentia sp protein is Insulin (INS).